Reading from the N-terminus, the 198-residue chain is Endonuclease V (198 aa).

Residues Asp-38 and Asp-101 each coordinate Mg(2+).

The protein belongs to the endonuclease V family. The cofactor is Mg(2+).

The protein localises to the cytoplasm. It carries out the reaction Endonucleolytic cleavage at apurinic or apyrimidinic sites to products with a 5'-phosphate.. Functionally, DNA repair enzyme involved in the repair of deaminated bases. Selectively cleaves double-stranded DNA at the second phosphodiester bond 3' to a deoxyinosine leaving behind the intact lesion on the nicked DNA. The polypeptide is Endonuclease V (Saccharolobus islandicus (strain M.16.27) (Sulfolobus islandicus)).